The primary structure comprises 324 residues: Non-homologous end joining protein Ku 1 (324 aa).

A Ku domain is found at 10–193 (INFGLVTIPV…AKPSDKEIQM (184 aa)). Residues 256–324 (QARRGRGGQV…SGGRRRRRAS (69 aa)) form a disordered region. Residues 281 to 292 (AELDKKAKELGI) are compositionally biased toward basic and acidic residues.

Belongs to the prokaryotic Ku family. Homodimer. Interacts with LigD.

Functionally, with LigD forms a non-homologous end joining (NHEJ) DNA repair enzyme, which repairs dsDNA breaks with reduced fidelity. Binds linear dsDNA with 5'- and 3'- overhangs but not closed circular dsDNA nor ssDNA. Recruits and stimulates the ligase activity of LigD. This Saccharopolyspora erythraea (strain ATCC 11635 / DSM 40517 / JCM 4748 / NBRC 13426 / NCIMB 8594 / NRRL 2338) protein is Non-homologous end joining protein Ku 1.